Here is a 194-residue protein sequence, read N- to C-terminus: UPF0301 protein FTM_0963 (194 aa).

Belongs to the UPF0301 (AlgH) family.

The protein is UPF0301 protein FTM_0963 of Francisella tularensis subsp. mediasiatica (strain FSC147).